The sequence spans 116 residues: Vesicle-associated membrane protein 5 (116 aa).

The Cytoplasmic portion of the chain corresponds to 1-72 (MAGIELERCQ…CWENIRYRIC (72 aa)). The region spanning 5 to 65 (ELERCQQQAN…QNLAQKKCWE (61 aa)) is the v-SNARE coiled-coil homology domain. Residues Ser-41, Ser-48, and Ser-49 each carry the phosphoserine modification. A helical; Anchor for type IV membrane protein membrane pass occupies residues 73–93 (VGLVVVGVLLIILIVLLVVFL). Residues 94-116 (PQSSDSSSAPRTQDAGIASGPGN) are Vesicular-facing. The segment at 96–116 (SSDSSSAPRTQDAGIASGPGN) is disordered.

The protein belongs to the synaptobrevin family. Post-translationally, (Microbial infection) Targeted and hydrolyzed by C.botulinum neurotoxin type X (BoNT/X) which hydrolyzes the 40-Arg-|-Ser-41 bond and probably inhibits neurotransmitter release. It remains unknown whether BoNT/X is ever produced, or what organisms it targets.

It localises to the cell membrane. Its subcellular location is the endomembrane system. It is found in the golgi apparatus. The protein localises to the trans-Golgi network membrane. Its function is as follows. May participate in trafficking events that are associated with myogenesis, such as myoblast fusion and/or GLUT4 trafficking. The sequence is that of Vesicle-associated membrane protein 5 (VAMP5) from Homo sapiens (Human).